Here is a 233-residue protein sequence, read N- to C-terminus: Protein DEHYDRATION-INDUCED 19 homolog 2 (233 aa).

Residues 176 to 215 are disordered; the sequence is DLHSDSSDNNFLLNKFPDDKTAERAEPSLSEKDQKERAQR. Positions 191–214 are enriched in basic and acidic residues; the sequence is FPDDKTAERAEPSLSEKDQKERAQ.

It belongs to the Di19 family.

The protein is Protein DEHYDRATION-INDUCED 19 homolog 2 (DI19-2) of Oryza sativa subsp. japonica (Rice).